The sequence spans 294 residues: NAD kinase (294 aa).

Asp73 functions as the Proton acceptor in the catalytic mechanism. NAD(+)-binding positions include 73-74 (DG), 147-148 (NE), His158, Arg175, Asp177, and 188-193 (TAYALS).

It belongs to the NAD kinase family. A divalent metal cation serves as cofactor.

It is found in the cytoplasm. The catalysed reaction is NAD(+) + ATP = ADP + NADP(+) + H(+). Its function is as follows. Involved in the regulation of the intracellular balance of NAD and NADP, and is a key enzyme in the biosynthesis of NADP. Catalyzes specifically the phosphorylation on 2'-hydroxyl of the adenosine moiety of NAD to yield NADP. This Tolumonas auensis (strain DSM 9187 / NBRC 110442 / TA 4) protein is NAD kinase.